Reading from the N-terminus, the 528-residue chain is Sulfhydryl oxidase 1 (528 aa).

Residues 1-19 (MSLIHLFLLLGLLSLEAAA) form the signal peptide. The Thioredoxin domain maps to 35–170 (NVADQKDNAI…LLNWINKQIG (136 aa)). A glycan (N-linked (GlcNAc...) asparagine) is linked at N47. Active-site nucleophile residues include C72 and C75. Residues C72 and C75 are joined by a disulfide bond. N-linked (GlcNAc...) asparagine glycans are attached at residues N186 and N297. An intrachain disulfide couples C292 to C304. The ERV/ALR sulfhydryl oxidase domain maps to 295–397 (SKNETRGFSC…GDPKFPKMIW (103 aa)). Residues R300, W307, H311, D341, H345, 368–375 (WSTHNKVN), K394, and W397 each bind FAD. C339 and C342 are joined by a disulfide. The cysteines at positions 403 and 406 are disulfide-linked.

FAD serves as cofactor. Highly expressed in roots.

The protein localises to the secreted. It localises to the cell wall. It catalyses the reaction 2 R'C(R)SH + O2 = R'C(R)S-S(R)CR' + H2O2. In terms of biological role, sulfhydryl oxidase involved in the regulation of cation homeostasis. Positively regulates shoot accumulation of K(+) and inhibits accumulation of toxic cations. Acts at the level of root K(+) efflux systems involved in xylem loading (root symplast-xylem interface). The polypeptide is Sulfhydryl oxidase 1 (QSOX1) (Arabidopsis thaliana (Mouse-ear cress)).